We begin with the raw amino-acid sequence, 306 residues long: Tyrosine recombinase XerC (306 aa).

A Core-binding (CB) domain is found at 2 to 81 (AKASAAIEEF…ALRQFYGFLV (80 aa)). In terms of domain architecture, Tyr recombinase spans 102-283 (PLPKTLSHKE…DAARLVALVN (182 aa)). Active-site residues include arginine 146, lysine 170, histidine 235, arginine 238, and histidine 261. Tyrosine 270 functions as the O-(3'-phospho-DNA)-tyrosine intermediate in the catalytic mechanism.

The protein belongs to the 'phage' integrase family. XerC subfamily. Forms a cyclic heterotetrameric complex composed of two molecules of XerC and two molecules of XerD.

The protein localises to the cytoplasm. Functionally, site-specific tyrosine recombinase, which acts by catalyzing the cutting and rejoining of the recombining DNA molecules. The XerC-XerD complex is essential to convert dimers of the bacterial chromosome into monomers to permit their segregation at cell division. It also contributes to the segregational stability of plasmids. In Erythrobacter litoralis (strain HTCC2594), this protein is Tyrosine recombinase XerC.